The following is a 417-amino-acid chain: Argininosuccinate synthase (417 aa).

8-16 contacts ATP; sequence AYSGGLDTS. Tyrosine 87 is a binding site for L-citrulline. Glycine 117 is a binding site for ATP. Positions 119, 123, and 124 each coordinate L-aspartate. L-citrulline is bound at residue asparagine 123. L-citrulline-binding residues include arginine 127, serine 175, glutamate 259, and tyrosine 271.

Belongs to the argininosuccinate synthase family. Type 1 subfamily. Homotetramer.

The protein localises to the cytoplasm. The enzyme catalyses L-citrulline + L-aspartate + ATP = 2-(N(omega)-L-arginino)succinate + AMP + diphosphate + H(+). The protein operates within amino-acid biosynthesis; L-arginine biosynthesis; L-arginine from L-ornithine and carbamoyl phosphate: step 2/3. This chain is Argininosuccinate synthase, found in Clavibacter sepedonicus (Clavibacter michiganensis subsp. sepedonicus).